The primary structure comprises 32 residues: Calcitonin-2 (32 aa).

Cysteine 1 and cysteine 7 are disulfide-bonded. Proline 32 is modified (proline amide).

This sequence belongs to the calcitonin family.

Its subcellular location is the secreted. Causes a rapid but short-lived drop in the level of calcium and phosphate in blood by promoting the incorporation of those ions in the bones. This is Calcitonin-2 from Oncorhynchus gorbuscha (Pink salmon).